The primary structure comprises 325 residues: MAYELEFEKPLVELRKKISELKEFTKHRDVDFSDEINKLEARLEKLENDIYANLSPWDRVQIARHPNRPTTLDYIERLFTNFFECHGDRCFGDDEAIVGGIAKYHGLPVTVIGHQRGKDTKENIRRNFGMPHPEGYRKALRLMKQAEKFGRPIICFIDTKGAYPGKAAEERGQSEAIARNLFEMAGLTVPVVCVVIGEGGSGGALALGVGNYVHMLENSTYSVISPEGAAAILWKDASLAKKAAETMKITAKDLKQLGVIDEIIPEVRGGAHRNVDEQAKYIDDVLKRSLRELLPLHAEQLIAQRYEKYKKIGDFVESQQHVSVM.

The region spanning 35 to 292 (EINKLEARLE…DDVLKRSLRE (258 aa)) is the CoA carboxyltransferase C-terminal domain.

It belongs to the AccA family. In terms of assembly, acetyl-CoA carboxylase is a heterohexamer composed of biotin carboxyl carrier protein (AccB), biotin carboxylase (AccC) and two subunits each of ACCase subunit alpha (AccA) and ACCase subunit beta (AccD).

Its subcellular location is the cytoplasm. The catalysed reaction is N(6)-carboxybiotinyl-L-lysyl-[protein] + acetyl-CoA = N(6)-biotinyl-L-lysyl-[protein] + malonyl-CoA. The protein operates within lipid metabolism; malonyl-CoA biosynthesis; malonyl-CoA from acetyl-CoA: step 1/1. Its function is as follows. Component of the acetyl coenzyme A carboxylase (ACC) complex. First, biotin carboxylase catalyzes the carboxylation of biotin on its carrier protein (BCCP) and then the CO(2) group is transferred by the carboxyltransferase to acetyl-CoA to form malonyl-CoA. This chain is Acetyl-coenzyme A carboxylase carboxyl transferase subunit alpha, found in Anoxybacillus flavithermus (strain DSM 21510 / WK1).